A 125-amino-acid polypeptide reads, in one-letter code: MFRSVCRISSRVAPSAYRTIMGRSVMSNTILAQRFYSANLSKDQVSQRVIDVIKAFDKNSPNIANKQISSDTQFHKDLGLDSLDTVELLVAIEEEFDIEIPDKVADELRSVGETVDYIASNPDAN.

The N-terminal 36 residues, 1-36 (MFRSVCRISSRVAPSAYRTIMGRSVMSNTILAQRFY), are a transit peptide targeting the mitochondrion. The region spanning 43 to 122 (DQVSQRVIDV…ETVDYIASNP (80 aa)) is the Carrier domain. Serine 82 carries the post-translational modification O-(pantetheine 4'-phosphoryl)serine.

This sequence belongs to the acyl carrier protein (ACP) family. Complex I is composed of about 30 different subunits. Post-translationally, 4'-phosphopantetheine is transferred from CoA to a specific serine of apo-ACP by acpS. This modification is essential for activity because fatty acids are bound in thioester linkage to the sulfhydryl of the prosthetic group.

It is found in the mitochondrion. It functions in the pathway lipid metabolism; fatty acid biosynthesis. Carrier of the growing fatty acid chain in fatty acid biosynthesis. May be involved in the synthesis of very-long-chain fatty acids. Accessory and non-catalytic subunit of the mitochondrial membrane respiratory chain NADH dehydrogenase (Complex I), which functions in the transfer of electrons from NADH to the respiratory chain. In Saccharomyces cerevisiae (strain ATCC 204508 / S288c) (Baker's yeast), this protein is Acyl carrier protein, mitochondrial (ACP1).